A 160-amino-acid polypeptide reads, in one-letter code: SsrA-binding protein (160 aa).

Belongs to the SmpB family.

The protein resides in the cytoplasm. Its function is as follows. Required for rescue of stalled ribosomes mediated by trans-translation. Binds to transfer-messenger RNA (tmRNA), required for stable association of tmRNA with ribosomes. tmRNA and SmpB together mimic tRNA shape, replacing the anticodon stem-loop with SmpB. tmRNA is encoded by the ssrA gene; the 2 termini fold to resemble tRNA(Ala) and it encodes a 'tag peptide', a short internal open reading frame. During trans-translation Ala-aminoacylated tmRNA acts like a tRNA, entering the A-site of stalled ribosomes, displacing the stalled mRNA. The ribosome then switches to translate the ORF on the tmRNA; the nascent peptide is terminated with the 'tag peptide' encoded by the tmRNA and targeted for degradation. The ribosome is freed to recommence translation, which seems to be the essential function of trans-translation. The protein is SsrA-binding protein of Histophilus somni (strain 129Pt) (Haemophilus somnus).